A 694-amino-acid polypeptide reads, in one-letter code: Elongation factor G (694 aa).

The 280-residue stretch at 9 to 288 folds into the tr-type G domain; that stretch reads DAIRNIGIMA…VIVKWLPSPL (280 aa). Residues 18–25, 82–86, and 136–139 contribute to the GTP site; these read AHIDAGKT, DTPGH, and NKMD.

Belongs to the TRAFAC class translation factor GTPase superfamily. Classic translation factor GTPase family. EF-G/EF-2 subfamily.

It is found in the cytoplasm. Functionally, catalyzes the GTP-dependent ribosomal translocation step during translation elongation. During this step, the ribosome changes from the pre-translocational (PRE) to the post-translocational (POST) state as the newly formed A-site-bound peptidyl-tRNA and P-site-bound deacylated tRNA move to the P and E sites, respectively. Catalyzes the coordinated movement of the two tRNA molecules, the mRNA and conformational changes in the ribosome. The protein is Elongation factor G of Chlamydia trachomatis serovar L2b (strain UCH-1/proctitis).